The primary structure comprises 144 residues: UPF0102 protein BURPS668_3819 (144 aa).

A disordered region spans residues methionine 1–serine 28. Over residues alanine 16–serine 28 the composition is skewed to basic and acidic residues.

This sequence belongs to the UPF0102 family.

This Burkholderia pseudomallei (strain 668) protein is UPF0102 protein BURPS668_3819.